Consider the following 446-residue polypeptide: Ubiquitin carboxyl-terminal hydrolase MINDY-3 (446 aa).

Cys-51 serves as the catalytic Nucleophile. A compositionally biased stretch (basic and acidic residues) spans 117 to 128 (DNSDITDSHPEP). Residues 117 to 137 (DNSDITDSHPEPESSQPTDTP) are disordered. His-288 functions as the Proton acceptor in the catalytic mechanism.

The protein belongs to the MINDY deubiquitinase family. FAM188 subfamily.

It is found in the nucleus. The enzyme catalyses Thiol-dependent hydrolysis of ester, thioester, amide, peptide and isopeptide bonds formed by the C-terminal Gly of ubiquitin (a 76-residue protein attached to proteins as an intracellular targeting signal).. Functionally, hydrolase that can remove 'Lys-48'-linked conjugated ubiquitin from proteins. This chain is Ubiquitin carboxyl-terminal hydrolase MINDY-3 (mindy3), found in Danio rerio (Zebrafish).